A 101-amino-acid polypeptide reads, in one-letter code: Small ribosomal subunit protein uS14 (101 aa).

The protein belongs to the universal ribosomal protein uS14 family. In terms of assembly, part of the 30S ribosomal subunit. Contacts proteins S3 and S10.

In terms of biological role, binds 16S rRNA, required for the assembly of 30S particles and may also be responsible for determining the conformation of the 16S rRNA at the A site. This chain is Small ribosomal subunit protein uS14, found in Cupriavidus metallidurans (strain ATCC 43123 / DSM 2839 / NBRC 102507 / CH34) (Ralstonia metallidurans).